The sequence spans 1071 residues: MKLIYTEMSYSMTEILVNEARKAADQGYRVFYIAPNSLSFEKEREVLTLLPERGTFSIIVTRFVQMSRYFTVESSPSKQHLDDTTLAMIFYRALMQLKPEDLPSYGRLQNNSVFIEQLVELYKELKNAQLSVHDLTGLDHPQKQEDLIKIIELAETIMIQQDYNQDSPLQSFARAIKLGLLNNQLSKTVVVIDGFSRFSAEEDYLLSLLNNNCQEVIIGSYVSQKAYQKSFIKGNIYEASLHFLQDLAQKYHIKPVFATSNQVFKPAFSRLTQLFEATHDFSQVDWQLQKNDLDHFSLWQCHHQKEEIEHVAKSIRQKLYEGYRYKDILVLLGDMDAYQLQIGPIFDKFEIPYYLGKAEPMAAHPLVQFIESLERSQRYNWRREDILNMLKSGLFGCFDDSDIDRFEEYTQFADIKGFTKFSKPFTINSSRQYPLDFLNEMRQDIVLPLQELFKSQKQLGASLVDKLILFLKKIRLAENMQGLAQSQLEVEKNEEVWKRFTDILTSFHHIFGQEKLRLSDCLALIKTGMKSAQYRVVPATLDVVTIKSYDLVQPHSKPFVYAIGLTQSHFPKQIHHSGLLSDQERARINEIRNYRHFDIASAENSKKNHQTALSLFNAATKELVLSVPTVINETFDDLSPYLKELINFGLPLLDKGKNYLSYDNSDIANYKALLSQIIAINRQDLIEMADQDKMFWTGVLRYLRKQLRKQQLELPTSDYRLSTKPLSKEVIEVCFPKGIPLKLSATALTVFYNNQYNYFLKYVLNLNKTESIHPDSRIHGQYLHRVFERLMKDHTQEPFDNKLKQAIYHTNQESFFQQVYQDNAEAEYSLAILEDIVRSTAPILQLNQNIQVIDQEKNFQLDMGNEILVHGIIDRIDQLSDGSLGIVDYKSSANQFDIGTFYNGLSPQLVTYLAALKQIAPHDINQLFGAMYLHLQDPKLDLVTFKQIDNTLVESIYKALTYKGIFSEVEKEHLSTGAYQTKNALYSNDELETLLNYNKYLYLKAAKHIKKGHFLINPYTSDGKTVQGDQLKAITRFEADLDMGQARRLVTLPAKEKKECFLTLMRKESHL.

The protein belongs to the helicase family. AddB/RexB type 2 subfamily. In terms of assembly, heterodimer of AddA and RexB. The cofactor is Mg(2+).

Its function is as follows. The heterodimer acts as both an ATP-dependent DNA helicase and an ATP-dependent, dual-direction single-stranded exonuclease. Recognizes the chi site generating a DNA molecule suitable for the initiation of homologous recombination. This subunit has 5' -&gt; 3' nuclease activity but not helicase activity. The chain is ATP-dependent helicase/deoxyribonuclease subunit B from Streptococcus pyogenes serotype M49 (strain NZ131).